A 359-amino-acid chain; its full sequence is tRNA N6-adenosine threonylcarbamoyltransferase (359 aa).

Fe cation-binding residues include histidine 115 and histidine 119. Substrate is bound by residues 137 to 141, aspartate 170, glycine 183, and asparagine 283; that span reads LVSGG. Residue aspartate 311 coordinates Fe cation. The disordered stretch occupies residues 328–359; sequence APDSLDIAPRSRWPLDEKSAPVFGTGRRGAKA.

It belongs to the KAE1 / TsaD family. Requires Fe(2+) as cofactor.

It localises to the cytoplasm. It catalyses the reaction L-threonylcarbamoyladenylate + adenosine(37) in tRNA = N(6)-L-threonylcarbamoyladenosine(37) in tRNA + AMP + H(+). Its function is as follows. Required for the formation of a threonylcarbamoyl group on adenosine at position 37 (t(6)A37) in tRNAs that read codons beginning with adenine. Is involved in the transfer of the threonylcarbamoyl moiety of threonylcarbamoyl-AMP (TC-AMP) to the N6 group of A37, together with TsaE and TsaB. TsaD likely plays a direct catalytic role in this reaction. The protein is tRNA N6-adenosine threonylcarbamoyltransferase of Brucella canis (strain ATCC 23365 / NCTC 10854 / RM-666).